Consider the following 714-residue polypeptide: VIN3-like protein 2 (714 aa).

The segment at 164 to 232 (RCSCCICRKY…CFYCVSCGKA (69 aa)) adopts a PHD-type zinc-finger fold. Residues 239–246 (WKKQLTIA) carry the Nuclear localization signal motif. In terms of domain architecture, Fibronectin type-III spans 366-463 (GSTKIRFEDV…INVLTRSAEE (98 aa)). Polar residues predominate over residues 478–498 (LTNCSTLSSNPSSVEAESNND). The segment at 478-530 (LTNCSTLSSNPSSVEAESNNDYIVPKKPSSKNEDNNSPSVDESAAKRMKRTTD) is disordered. Residues 602–714 (SMKDNCNNGD…PSGFCMKLWH (113 aa)) form a VIN3-Interacting Domain (VID) region.

In terms of assembly, self-interacts. Interacts with VIN3 and VIL1. Component of the plant homeodomain / polycomb repressive complex 2 (PHD-PRC2) large complex during prolonged cold, composed of core PRC2 components (VRN2, EZA1, FIE and MSI1), and three related PHD finger proteins (VIL1, VIL2 and VIN3) that mediates histone H3 trimethylation on 'Lys-27' (H3K27me3).

It is found in the nucleus. Maybe involved in both the vernalization and photoperiod pathways by regulating gene expression. Binds preferentially to dimethylated histone H3 'Lys-9' (H3K9me2). Promotes flowering in non-inductive photoperiods (e.g. short days) through the maintenance of the epigenetically repressed state of MAF5 via H3K9me2 and plant homeodomain / polycomb repressive complex 2 (PHD-PRC2)-dependent H3K27me3. The protein is VIN3-like protein 2 (VIL2) of Arabidopsis thaliana (Mouse-ear cress).